We begin with the raw amino-acid sequence, 434 residues long: Enolase (434 aa).

Residue Gln-163 coordinates (2R)-2-phosphoglycerate. The active-site Proton donor is the Glu-205. Residues Asp-242, Glu-291, and Asp-318 each contribute to the Mg(2+) site. The (2R)-2-phosphoglycerate site is built by Lys-343, Arg-372, Ser-373, and Lys-394. Lys-343 acts as the Proton acceptor in catalysis.

This sequence belongs to the enolase family. Mg(2+) is required as a cofactor.

It is found in the cytoplasm. The protein resides in the secreted. It localises to the cell surface. It catalyses the reaction (2R)-2-phosphoglycerate = phosphoenolpyruvate + H2O. The protein operates within carbohydrate degradation; glycolysis; pyruvate from D-glyceraldehyde 3-phosphate: step 4/5. Functionally, catalyzes the reversible conversion of 2-phosphoglycerate (2-PG) into phosphoenolpyruvate (PEP). It is essential for the degradation of carbohydrates via glycolysis. This Streptococcus thermophilus (strain ATCC BAA-491 / LMD-9) protein is Enolase.